The primary structure comprises 187 residues: Putative adenylate kinase (187 aa).

Residues Gly10, Gly12, Lys13, Thr14, and Val15 each coordinate ATP. An NMP region spans residues 30-53; the sequence is SLSQFVIENKLYTEYDELRQSYII. An LID region spans residues 103–113; it reads GRGWADIKVAE. Arg104 is a binding site for ATP.

This sequence belongs to the adenylate kinase family. AK6 subfamily. In terms of assembly, interacts with uS11. Not a structural component of 40S pre-ribosomes, but transiently interacts with them by binding to uS11.

The catalysed reaction is AMP + ATP = 2 ADP. It carries out the reaction ATP + H2O = ADP + phosphate + H(+). Functionally, broad-specificity nucleoside monophosphate (NMP) kinase that catalyzes the reversible transfer of the terminal phosphate group between nucleoside triphosphates and monophosphates. Also has ATPase activity. Involved in the late maturation steps of the 30S ribosomal particles, specifically 16S rRNA maturation. While NMP activity is not required for ribosome maturation, ATPase activity is. Associates transiently with small ribosomal subunit protein uS11. ATP hydrolysis breaks the interaction with uS11. May temporarily remove uS11 from the ribosome to enable a conformational change of the ribosomal RNA that is needed for the final maturation step of the small ribosomal subunit. The chain is Putative adenylate kinase from Saccharolobus islandicus (strain M.16.4 / Kamchatka #3) (Sulfolobus islandicus).